Reading from the N-terminus, the 422-residue chain is UDP-N-acetylglucosamine 1-carboxyvinyltransferase (422 aa).

Phosphoenolpyruvate is bound at residue 22–23 (KN). Arginine 94 lines the UDP-N-acetyl-alpha-D-glucosamine pocket. The active-site Proton donor is cysteine 118. Position 118 is a 2-(S-cysteinyl)pyruvic acid O-phosphothioketal (cysteine 118). UDP-N-acetyl-alpha-D-glucosamine is bound by residues 123–127 (RPVDL), aspartate 309, and isoleucine 331.

The protein belongs to the EPSP synthase family. MurA subfamily.

It localises to the cytoplasm. It carries out the reaction phosphoenolpyruvate + UDP-N-acetyl-alpha-D-glucosamine = UDP-N-acetyl-3-O-(1-carboxyvinyl)-alpha-D-glucosamine + phosphate. Its pathway is cell wall biogenesis; peptidoglycan biosynthesis. Functionally, cell wall formation. Adds enolpyruvyl to UDP-N-acetylglucosamine. The chain is UDP-N-acetylglucosamine 1-carboxyvinyltransferase from Cereibacter sphaeroides (strain KD131 / KCTC 12085) (Rhodobacter sphaeroides).